The primary structure comprises 747 residues: Major facilitator superfamily domain-containing protein 6-B (747 aa).

11 helical membrane-spanning segments follow: residues 15 to 35 (LLFF…CVLQ), 75 to 95 (KAVL…IGFV), 222 to 242 (TIFL…APAV), 271 to 291 (WGIA…TIFI), 306 to 326 (IAFI…TQFH), 391 to 411 (VLFV…FLFW), 420 to 440 (TTLF…AYFI), 453 to 470 (VLYI…YISY), 485 to 507 (GLTH…PPAL), 520 to 540 (LGLG…FFGA), and 546 to 566 (GLGM…WLLG). Polar residues-rich tracts occupy residues 597 to 606 (NQSTSQPNSD) and 652 to 668 (NNDC…QTSA). 2 disordered regions span residues 597-625 (NQST…NKPA) and 652-747 (NNDC…PTTH). A compositionally biased stretch (low complexity) spans 675 to 685 (STSSQPNASSS).

This sequence belongs to the major facilitator superfamily. MFSD6 family.

Its subcellular location is the membrane. In Danio rerio (Zebrafish), this protein is Major facilitator superfamily domain-containing protein 6-B (mfsd6b).